Reading from the N-terminus, the 393-residue chain is NAD(P)H-quinone oxidoreductase subunit H, chloroplastic (393 aa).

It belongs to the complex I 49 kDa subunit family. NDH is composed of at least 16 different subunits, 5 of which are encoded in the nucleus.

The protein localises to the plastid. It is found in the chloroplast thylakoid membrane. It catalyses the reaction a plastoquinone + NADH + (n+1) H(+)(in) = a plastoquinol + NAD(+) + n H(+)(out). The catalysed reaction is a plastoquinone + NADPH + (n+1) H(+)(in) = a plastoquinol + NADP(+) + n H(+)(out). NDH shuttles electrons from NAD(P)H:plastoquinone, via FMN and iron-sulfur (Fe-S) centers, to quinones in the photosynthetic chain and possibly in a chloroplast respiratory chain. The immediate electron acceptor for the enzyme in this species is believed to be plastoquinone. Couples the redox reaction to proton translocation, and thus conserves the redox energy in a proton gradient. The chain is NAD(P)H-quinone oxidoreductase subunit H, chloroplastic from Hordeum vulgare (Barley).